The following is a 227-amino-acid chain: MKEFFITGTDTDAGKTHVTSLLLKLLAQHKKQAIGFKPLASGCEMAFDQLVNADALILMESATVSAKYDIINPFAFAPAIAPHIAAEQAGVTITADKLSSAYKNVKQQGADYILTEGAGGWALPISNTDYLYNWVKAEQLPVILVVGMKLGCLNHALLTAAHMQSMGINCIGWIANQVDPNMDEYQANLDSLKLRLPFPILAISPYSEQTPKLQIYKTLLENFALNT.

12 to 17 (DAGKTH) serves as a coordination point for ATP. Thr16 contacts Mg(2+). Lys37 is an active-site residue. Ser41 is a substrate binding site. ATP contacts are provided by residues Asp54, 116 to 119 (EGAG), 176 to 177 (NQ), and 205 to 207 (PYS). Residues Asp54 and Glu116 each contribute to the Mg(2+) site.

Belongs to the dethiobiotin synthetase family. In terms of assembly, homodimer. The cofactor is Mg(2+).

Its subcellular location is the cytoplasm. The catalysed reaction is (7R,8S)-7,8-diammoniononanoate + CO2 + ATP = (4R,5S)-dethiobiotin + ADP + phosphate + 3 H(+). It participates in cofactor biosynthesis; biotin biosynthesis; biotin from 7,8-diaminononanoate: step 1/2. Its function is as follows. Catalyzes a mechanistically unusual reaction, the ATP-dependent insertion of CO2 between the N7 and N8 nitrogen atoms of 7,8-diaminopelargonic acid (DAPA, also called 7,8-diammoniononanoate) to form a ureido ring. In Pseudoalteromonas translucida (strain TAC 125), this protein is ATP-dependent dethiobiotin synthetase BioD.